The primary structure comprises 574 residues: Sulfate adenylyltransferase (574 aa).

Positions 1-170 are N-terminal; it reads MANTPHGGVL…LEAINRLEHY (170 aa). Residues 171–395 form a catalytic region; that stretch reads DFLDLRFTPS…LREENPLPAE (225 aa). Gln198 provides a ligand contact to sulfate. ATP is bound by residues 198-201 and 292-295; these read QTRN and GRDH. Residues Thr199, Arg200, and Asn201 contribute to the active site. Arg200 is a binding site for sulfate. Ala296 serves as a coordination point for sulfate. Position 334 (Met334) interacts with ATP. Positions 396–574 are allosteric regulation domain; adenylyl-sulfate kinase-like; sequence KGFTVFMTGY…LESNGLLDRL (179 aa). 3'-phosphoadenylyl sulfate contacts are provided by residues 435-438, Arg452, 478-479, and Lys516; these read ENVR and IA.

This sequence in the N-terminal section; belongs to the sulfate adenylyltransferase family. The protein in the C-terminal section; belongs to the APS kinase family. In terms of assembly, homohexamer. Dimer of trimers.

It localises to the cytoplasm. The enzyme catalyses sulfate + ATP + H(+) = adenosine 5'-phosphosulfate + diphosphate. The protein operates within sulfur metabolism; hydrogen sulfide biosynthesis; sulfite from sulfate: step 1/3. With respect to regulation, allosterically inhibited by 3'-phosphoadenosine 5'-phosphosulfate (PAPS). In terms of biological role, catalyzes the first intracellular reaction of sulfate assimilation, forming adenosine-5'-phosphosulfate (APS) from inorganic sulfate and ATP. Plays an important role in sulfate activation as a component of the biosynthesis pathway of sulfur-containing amino acids. The chain is Sulfate adenylyltransferase from Gibberella zeae (strain ATCC MYA-4620 / CBS 123657 / FGSC 9075 / NRRL 31084 / PH-1) (Wheat head blight fungus).